A 715-amino-acid polypeptide reads, in one-letter code: D-ribulokinase YDR109C (715 aa).

The segment at 1 to 27 (MKSRKRQNNMQNETREPAVLSSQETSI) is disordered.

It belongs to the FGGY kinase family.

It carries out the reaction D-ribulose + ATP = D-ribulose 5-phosphate + ADP + H(+). Its pathway is carbohydrate metabolism; pentose and glucuronate interconversion. Catalyzes ATP-dependent phosphorylation of D-ribulose at C-5 to form D-ribulose 5-phosphate. Postulated to function in a metabolite repair mechanism by preventing toxic accumulation of free D-ribulose formed by non-specific phosphatase activities. Alternatively, may play a role in regulating D-ribulose 5-phosphate recycling in the pentose phosphate pathway. The chain is D-ribulokinase YDR109C from Saccharomyces cerevisiae (strain ATCC 204508 / S288c) (Baker's yeast).